Reading from the N-terminus, the 140-residue chain is UPF0336 protein TW736 (140 aa).

The protein belongs to the UPF0336 family.

In Tropheryma whipplei (strain TW08/27) (Whipple's bacillus), this protein is UPF0336 protein TW736.